We begin with the raw amino-acid sequence, 139 residues long: Thyrotropin subunit beta (139 aa).

The first 20 residues, 1 to 20 (MELSVAMCGLLCLLFSQAVP), serve as a signal peptide directing secretion. Disulfide bonds link C22-C72, C36-C87, C39-C127, C47-C103, C51-C105, and C108-C115. A glycan (N-linked (GlcNAc...) asparagine) is linked at N43.

It belongs to the glycoprotein hormones subunit beta family. In terms of assembly, heterodimer of a common alpha chain and a unique beta chain which confers biological specificity to thyrotropin, lutropin, follitropin and gonadotropin.

Its subcellular location is the secreted. In terms of biological role, indispensable for the control of thyroid structure and metabolism. May play some role in the biological processes of the immature fishes. This is Thyrotropin subunit beta (tshb) from Salmo salar (Atlantic salmon).